The chain runs to 160 residues: MSTLKKPDLSDPKLRAKLAKGMGHNYYGEPAWPNDLLYIFPVVILGTIACVVGLAVLDPAMLGDKANPFATPLEILPEWYLYPVFQILRVVPNKLLGIALQTLIPLGLMILPFIENVNKFSNPFRRPVAMVVFLFGTFLTIYLGIGACLPIDKSLTLGLF.

A run of 3 helical transmembrane segments spans residues 36–56 (LLYIFPVVILGTIACVVGLAV), 95–115 (LLGIALQTLIPLGLMILPFIE), and 131–151 (VVFLFGTFLTIYLGIGACLPI).

Belongs to the cytochrome b family. PetD subfamily. In terms of assembly, the 4 large subunits of the cytochrome b6-f complex are cytochrome b6, subunit IV (17 kDa polypeptide, PetD), cytochrome f and the Rieske protein, while the 4 small subunits are PetG, PetL, PetM and PetN. The complex functions as a dimer.

The protein resides in the cellular thylakoid membrane. Component of the cytochrome b6-f complex, which mediates electron transfer between photosystem II (PSII) and photosystem I (PSI), cyclic electron flow around PSI, and state transitions. This is Cytochrome b6-f complex subunit 4 from Prochlorococcus marinus (strain MIT 9515).